A 157-amino-acid polypeptide reads, in one-letter code: Nascent polypeptide-associated complex subunit beta (157 aa).

Residues 1–31 are disordered; the sequence is MPVDPEKLAKLQKSTAKKVGGSRVKAKKGVK. The NAC-A/B domain maps to 33-98; the sequence is EQDDTKLIET…PQEKNITQLI (66 aa). The interval 125 to 157 is disordered; it reads NPKDFGAAGEAGATEEANEDIPDLVDQKFDDVE. Over residues 130–139 the composition is skewed to low complexity; that stretch reads GAAGEAGATE.

It belongs to the NAC-beta family. Part of the nascent polypeptide-associated complex (NAC), consisting of EGD2 and EGD1. NAC associates with ribosomes via EGD1.

The protein resides in the cytoplasm. It is found in the nucleus. Component of the nascent polypeptide-associated complex (NAC), a dynamic component of the ribosomal exit tunnel, protecting the emerging polypeptides from interaction with other cytoplasmic proteins to ensure appropriate nascent protein targeting. The NAC complex also promotes mitochondrial protein import by enhancing productive ribosome interactions with the outer mitochondrial membrane and blocks the inappropriate interaction of ribosomes translating non-secretory nascent polypeptides with translocation sites in the membrane of the endoplasmic reticulum. EGD1 may act as a transcription factor that exert a negative effect on the expression of several genes that are transcribed by RNA polymerase II. The polypeptide is Nascent polypeptide-associated complex subunit beta (EGD1) (Lodderomyces elongisporus (strain ATCC 11503 / CBS 2605 / JCM 1781 / NBRC 1676 / NRRL YB-4239) (Yeast)).